We begin with the raw amino-acid sequence, 239 residues long: tRNA1(Val) (adenine(37)-N6)-methyltransferase (239 aa).

This sequence belongs to the methyltransferase superfamily. tRNA (adenine-N(6)-)-methyltransferase family.

It localises to the cytoplasm. The catalysed reaction is adenosine(37) in tRNA1(Val) + S-adenosyl-L-methionine = N(6)-methyladenosine(37) in tRNA1(Val) + S-adenosyl-L-homocysteine + H(+). Functionally, specifically methylates the adenine in position 37 of tRNA(1)(Val) (anticodon cmo5UAC). This is tRNA1(Val) (adenine(37)-N6)-methyltransferase from Vibrio vulnificus (strain YJ016).